A 496-amino-acid chain; its full sequence is Glycerol kinase (496 aa).

Thr12 provides a ligand contact to ADP. The ATP site is built by Thr12, Thr13, and Ser14. Thr12 contributes to the sn-glycerol 3-phosphate binding site. Arg16 contacts ADP. Sn-glycerol 3-phosphate contacts are provided by Arg82, Glu83, and Tyr134. Glycerol-binding residues include Arg82, Glu83, and Tyr134. Position 230 is a phosphohistidine; by HPr (His230). Asp244 serves as a coordination point for sn-glycerol 3-phosphate. The glycerol site is built by Asp244 and Gln245. Thr266 and Gly309 together coordinate ADP. ATP is bound by residues Thr266, Gly309, Gln313, and Gly410. ADP-binding residues include Gly410 and Asn414.

Belongs to the FGGY kinase family. Homotetramer and homodimer (in equilibrium). In terms of processing, the phosphoenolpyruvate-dependent sugar phosphotransferase system (PTS), including enzyme I, and histidine-containing protein (HPr) are required for the phosphorylation, which leads to the activation of the enzyme.

The enzyme catalyses glycerol + ATP = sn-glycerol 3-phosphate + ADP + H(+). It functions in the pathway polyol metabolism; glycerol degradation via glycerol kinase pathway; sn-glycerol 3-phosphate from glycerol: step 1/1. With respect to regulation, activated by phosphorylation and inhibited by fructose 1,6-bisphosphate (FBP). Its function is as follows. Key enzyme in the regulation of glycerol uptake and metabolism. Catalyzes the phosphorylation of glycerol to yield sn-glycerol 3-phosphate. The polypeptide is Glycerol kinase (Bacillus cereus (strain Q1)).